A 209-amino-acid chain; its full sequence is Orotate phosphoribosyltransferase (209 aa).

Residues Arg-96, Lys-100, His-102, and 122–130 (EDLISTGGS) contribute to the 5-phospho-alpha-D-ribose 1-diphosphate site. Ser-126 lines the orotate pocket.

The protein belongs to the purine/pyrimidine phosphoribosyltransferase family. PyrE subfamily. Homodimer. Mg(2+) serves as cofactor.

The catalysed reaction is orotidine 5'-phosphate + diphosphate = orotate + 5-phospho-alpha-D-ribose 1-diphosphate. The protein operates within pyrimidine metabolism; UMP biosynthesis via de novo pathway; UMP from orotate: step 1/2. Its function is as follows. Catalyzes the transfer of a ribosyl phosphate group from 5-phosphoribose 1-diphosphate to orotate, leading to the formation of orotidine monophosphate (OMP). The chain is Orotate phosphoribosyltransferase from Streptococcus pyogenes serotype M1.